The following is a 264-amino-acid chain: 2-C-methyl-D-erythritol 4-phosphate cytidylyltransferase (264 aa).

The segment at 234–264 is disordered; the sequence is ARDPESAHPQSSVLASAFSGPGSRVSGPEEI.

The protein belongs to the IspD/TarI cytidylyltransferase family. IspD subfamily.

The enzyme catalyses 2-C-methyl-D-erythritol 4-phosphate + CTP + H(+) = 4-CDP-2-C-methyl-D-erythritol + diphosphate. Its pathway is isoprenoid biosynthesis; isopentenyl diphosphate biosynthesis via DXP pathway; isopentenyl diphosphate from 1-deoxy-D-xylulose 5-phosphate: step 2/6. Functionally, catalyzes the formation of 4-diphosphocytidyl-2-C-methyl-D-erythritol from CTP and 2-C-methyl-D-erythritol 4-phosphate (MEP). In Xanthomonas euvesicatoria pv. vesicatoria (strain 85-10) (Xanthomonas campestris pv. vesicatoria), this protein is 2-C-methyl-D-erythritol 4-phosphate cytidylyltransferase.